The following is a 208-amino-acid chain: Vacuolar iron transporter homolog 5 (208 aa).

Over 1 to 41 (MAAMMNNERSSSNKLQVDAENPAAVGDELDLAARANWLRAA) the chain is Cytoplasmic. The helical transmembrane segment at 42 to 62 (VLGANDGLVSTASLMLGVGAV) threads the bilayer. The Vacuolar segment spans residues 63 to 69 (KAEARAM). The helical transmembrane segment at 70 to 90 (VISGFAGLLAGACSMAIGEFV) threads the bilayer. At 91 to 125 (SVCSQRDVELAQLERDGKRGGEEEKALPSPAQAAA) the chain is on the cytoplasmic side. The chain crosses the membrane as a helical span at residues 126 to 146 (ASAMAFSVGAVVPLLAAGFIV). The Vacuolar segment spans residues 147 to 151 (NYRLR). A helical transmembrane segment spans residues 152 to 172 (IAVVVAVASVALAAFGCVGAV). Over 173-184 (LGRAAVARSSAR) the chain is Cytoplasmic. A helical transmembrane segment spans residues 185-205 (VVLGGWAAMGITFGLMRLFKA). Topologically, residues 206-208 (SGI) are vacuolar.

The protein belongs to the CCC1 family.

The protein localises to the vacuole membrane. The catalysed reaction is Fe(2+)(in) = Fe(2+)(out). Its function is as follows. Probable vacuolar iron transporter that may be involved in the regulation of iron distribution throughout the plant. The polypeptide is Vacuolar iron transporter homolog 5 (Oryza sativa subsp. japonica (Rice)).